A 101-amino-acid polypeptide reads, in one-letter code: Small ribosomal subunit protein uS14 (101 aa).

Residues 1–21 form a disordered region; sequence MAKTSSVEKNNRRRKLADQYG.

It belongs to the universal ribosomal protein uS14 family. In terms of assembly, part of the 30S ribosomal subunit. Contacts proteins S3 and S10.

In terms of biological role, binds 16S rRNA, required for the assembly of 30S particles and may also be responsible for determining the conformation of the 16S rRNA at the A site. The sequence is that of Small ribosomal subunit protein uS14 from Mesorhizobium japonicum (strain LMG 29417 / CECT 9101 / MAFF 303099) (Mesorhizobium loti (strain MAFF 303099)).